Reading from the N-terminus, the 88-residue chain is uncharacterized protein (88 aa).

A signal peptide spans 1–23 (MAVSGLRLTIVWGLLVLILTCQA). Residues 25–40 (DKPEGKPDEQPHDSGK) are compositionally biased toward basic and acidic residues. The segment at 25-45 (DKPEGKPDEQPHDSGKNSEPA) is disordered.

It is found in the secreted. This is an uncharacterized protein from Bos taurus (Bovine).